The following is a 308-amino-acid chain: Glycine betaine uptake system ATP-binding protein YehX (308 aa).

The ABC transporter domain occupies 2–235 (IEFSHVSKLF…PANDFVRQFF (234 aa)). An ATP-binding site is contributed by 34–41 (GTSGSGKS).

This sequence belongs to the ABC transporter superfamily. The complex is composed of two ATP-binding proteins (YehX), two transmembrane proteins (YehW and YehY) and a solute-binding protein (YehZ).

It carries out the reaction glycine betaine(out) + ATP + H2O = glycine betaine(in) + ADP + phosphate + H(+). Part of an ABC transporter complex involved in low-affinity glycine betaine uptake. Probably responsible for energy coupling to the transport system. This Escherichia coli (strain K12) protein is Glycine betaine uptake system ATP-binding protein YehX (yehX).